The primary structure comprises 398 residues: Mu-type opioid receptor (398 aa).

Topologically, residues 1–66 (MDSSTGPGNT…CPQTGSPSMV (66 aa)) are extracellular. N-linked (GlcNAc...) asparagine glycosylation is found at N9, N31, N38, N46, and N53. A helical transmembrane segment spans residues 67–91 (TAITIMALYSIVCVVGLFGNFLVMY). The Cytoplasmic segment spans residues 92–104 (VIVRYTKMKTATN). The helical transmembrane segment at 105-129 (IYIFNLALADALATSTLPFQSVNYL) threads the bilayer. Residues 130-140 (MGTWPFGTILC) are Extracellular-facing. C140 and C217 are oxidised to a cystine. Residues 141-163 (KIVISIDYYNMFTSIFTLCTMSV) traverse the membrane as a helical segment. At 164 to 183 (DRYIAVCHPVKALDFRTPRN) the chain is on the cytoplasmic side. A Phosphotyrosine modification is found at Y166. The chain crosses the membrane as a helical span at residues 184 to 205 (AKIVNVCNWILSSAIGLPVMFM). Residues 206–228 (ATTKYRQGSIDCTLTFSHPTWYW) are Extracellular-facing. Residues 229–253 (ENLLKICVFIFAFIMPVLIITVCYG) form a helical membrane-spanning segment. Residues 254 to 277 (LMILRLKSVRMLSGSKEKDRNLRR) are Cytoplasmic-facing. The chain crosses the membrane as a helical span at residues 278–304 (ITRMVLVVVAVFIVCWTPIHIYVIIKA). Over 305 to 312 (LITIPETT) the chain is Extracellular. Residues 313–336 (FQTVSWHFCIALGYTNSCLNPVLY) traverse the membrane as a helical segment. The NPxxY; plays a role in stabilizing the activated conformation of the receptor signature appears at 332–336 (NPVLY). Over 337–398 (AFLDENFKRC…NLEAETAPLP (62 aa)) the chain is Cytoplasmic. Residue C351 is the site of S-palmitoyl cysteine attachment. A disordered region spans residues 361 to 385 (QNSTRVRQNTREHPSTANTVDRTNH). S363 carries the post-translational modification Phosphoserine. Position 370 is a phosphothreonine (T370). At S375 the chain carries Phosphoserine. Residue T394 is modified to Phosphothreonine.

Belongs to the G-protein coupled receptor 1 family. As to quaternary structure, forms homooligomers and heterooligomers with other GPCRs, such as OPRD1, OPRK1, OPRL1, NPFFR2, ADRA2A, SSTR2, CNR1 and CCR5 (probably in dimeric forms). Interacts with heterotrimeric G proteins; interaction with a heterotrimeric complex containing GNAI1, GNB1 and GNG2 stabilizes the active conformation of the receptor and increases its affinity for endomorphin-2, the synthetic opioid peptide DAMGO and for morphinan agonists. Interacts with PPL; the interaction disrupts agonist-mediated G-protein activation. Interacts (via C-terminus) with DNAJB4 (via C-terminus). Interacts with calmodulin; the interaction inhibits the constitutive activity of OPRM1; it abolishes basal and attenuates agonist-stimulated G-protein coupling. Interacts with FLNA, PLD2, RANBP9 and WLS and GPM6A. Interacts with RTP4. Interacts with SYP and GNAS. Interacts with RGS9, RGS17, RGS20, RGS4, PPP1R9B and HINT1. In terms of processing, phosphorylated. Differentially phosphorylated in basal and agonist-induced conditions. Agonist-mediated phosphorylation modulates receptor internalization. Phosphorylated by GRK2 in a agonist-dependent manner. Phosphorylation at Tyr-166 requires receptor activation, is dependent on non-receptor protein tyrosine kinase Src and results in a decrease in agonist efficacy by reducing G-protein coupling efficiency. Phosphorylated on tyrosine residues; the phosphorylation is involved in agonist-induced G-protein-independent receptor down-regulation. Phosphorylation at Ser-375 is involved in G-protein-dependent but not beta-arrestin-dependent activation of the ERK pathway. Ubiquitinated. A basal ubiquitination seems not to be related to degradation. Ubiquitination is increased upon formation of OPRM1:OPRD1 oligomers leading to proteasomal degradation; the ubiquitination is diminished by RTP4. Brain. Is expressed in the cerebral cortex, caudate putamen, nucleus accumbens, septal nuclei, thalamus, hippocampus, and habenula. Not detected in cerebellum.

Its subcellular location is the cell membrane. It is found in the cell projection. The protein resides in the axon. The protein localises to the perikaryon. It localises to the dendrite. Its subcellular location is the endosome. Functionally, receptor for endogenous opioids such as beta-endorphin and endomorphin. Receptor for natural and synthetic opioids including morphine, heroin, DAMGO, fentanyl, etorphine, buprenorphin and methadone. Also activated by enkephalin peptides, such as Met-enkephalin or Met-enkephalin-Arg-Phe, with higher affinity for Met-enkephalin-Arg-Phe. Agonist binding to the receptor induces coupling to an inactive GDP-bound heterotrimeric G-protein complex and subsequent exchange of GDP for GTP in the G-protein alpha subunit leading to dissociation of the G-protein complex with the free GTP-bound G-protein alpha and the G-protein beta-gamma dimer activating downstream cellular effectors. The agonist- and cell type-specific activity is predominantly coupled to pertussis toxin-sensitive G(i) and G(o) G alpha proteins, GNAI1, GNAI2, GNAI3 and GNAO1 isoforms Alpha-1 and Alpha-2, and to a lesser extent to pertussis toxin-insensitive G alpha proteins GNAZ and GNA15. They mediate an array of downstream cellular responses, including inhibition of adenylate cyclase activity and both N-type and L-type calcium channels, activation of inward rectifying potassium channels, mitogen-activated protein kinase (MAPK), phospholipase C (PLC), phosphoinositide/protein kinase (PKC), phosphoinositide 3-kinase (PI3K) and regulation of NF-kappa-B. Also couples to adenylate cyclase stimulatory G alpha proteins. The selective temporal coupling to G-proteins and subsequent signaling can be regulated by RGSZ proteins, such as RGS9, RGS17 and RGS4. Phosphorylation by members of the GPRK subfamily of Ser/Thr protein kinases and association with beta-arrestins is involved in short-term receptor desensitization. Beta-arrestins associate with the GPRK-phosphorylated receptor and uncouple it from the G-protein thus terminating signal transduction. The phosphorylated receptor is internalized through endocytosis via clathrin-coated pits which involves beta-arrestins. The activation of the ERK pathway occurs either in a G-protein-dependent or a beta-arrestin-dependent manner and is regulated by agonist-specific receptor phosphorylation. Acts as a class A G-protein coupled receptor (GPCR) which dissociates from beta-arrestin at or near the plasma membrane and undergoes rapid recycling. Receptor down-regulation pathways are varying with the agonist and occur dependent or independent of G-protein coupling. Endogenous ligands induce rapid desensitization, endocytosis and recycling. Heterooligomerization with other GPCRs can modulate agonist binding, signaling and trafficking properties. This is Mu-type opioid receptor (Oprm1) from Rattus norvegicus (Rat).